The primary structure comprises 196 residues: Pycsar effector protein GmPycTM (196 aa).

3 helical membrane passes run 34 to 54 (ISFSLAFAGILLGGFFSSGII), 82 to 102 (ITTIVLVVFIILMIVSLTYLF), and 176 to 196 (VNWLIASTIVFIILNGMFLFL).

The protein resides in the cell inner membrane. Pycsar (pyrimidine cyclase system for antiphage resistance) provides immunity against bacteriophage. The pyrimidine cyclase (PycC) synthesizes cyclic nucleotides in response to infection; these serve as specific second messenger signals. The signals activate the adjacent effector, leading to bacterial cell death and abortive phage infection. A clade C Pycsar system. Functionally, the effector gene of a two-gene Pycsar system. Expression of this and adjacent uridylate cyclase GmPycC (AC P0DV42) probably confers resistance to bacteriophage. The genes are probably only expressed in response to bacteriophage infection. Probably only responds to cUMP (produced by its cognate NTP cyclase), acts by impairing membrane integrity. This chain is Pycsar effector protein GmPycTM, found in Gulbenkiania mobilis.